We begin with the raw amino-acid sequence, 238 residues long: Small ribosomal subunit protein eS4 (238 aa).

The S4 RNA-binding domain maps to Leu-38 to Ile-110.

It belongs to the eukaryotic ribosomal protein eS4 family.

The protein is Small ribosomal subunit protein eS4 of Pyrobaculum islandicum (strain DSM 4184 / JCM 9189 / GEO3).